A 278-amino-acid chain; its full sequence is uncharacterized protein (278 aa).

Positions 1–55 (MKIRERFSMVDLPVLIITAAIIGHDKYKAFHAGANDILQKPYHYSEFMARIQNLI) constitute a Response regulatory domain.

This is an uncharacterized protein from Bacillus subtilis (strain 168).